A 675-amino-acid chain; its full sequence is Probable potassium transport system protein Kup (675 aa).

12 helical membrane passes run 12–32, 55–75, 98–118, 143–163, 170–190, 216–236, 249–269, 296–316, 345–365, 374–394, 401–421, and 428–448; these read LGMLITLGVVYGDIGTSPLYV, VSLIFWTLMLITTVKYVLVAL, WLIFVALIGGAALLADGTLTP, WLVPLSVTLILVSLFTIQVLG, SFGPMMLLWFIVIGGIGLLNI, MGIFILGSVFLATTGAEALYS, TWPFVYAMLILNYLGQGAWML, IAMIVLATVAAIIASQALITG, IYIGAINWLLCLVTLSIVWLF, AYGLAITLTMLMTTILLSQWV, FWSLALLAGFGLLETLFLVAS, and GGYLTLGLTLMIFLIMVVWFF.

The protein belongs to the HAK/KUP transporter (TC 2.A.72) family.

The protein resides in the cell membrane. It carries out the reaction K(+)(in) + H(+)(in) = K(+)(out) + H(+)(out). Functionally, transport of potassium into the cell. Likely operates as a K(+):H(+) symporter. In Levilactobacillus brevis (strain ATCC 367 / BCRC 12310 / CIP 105137 / JCM 1170 / LMG 11437 / NCIMB 947 / NCTC 947) (Lactobacillus brevis), this protein is Probable potassium transport system protein Kup.